A 235-amino-acid chain; its full sequence is Transcription factor MYB59 (235 aa).

HTH myb-type domains are found at residues Gln5 to Leu57 and His58 to Ala112. The H-T-H motif DNA-binding region spans Trp33–Leu57. Residues Lys62–Lys65 carry the Bipartite nuclear localization signal 1 motif. The segment at residues Trp85–Met108 is a DNA-binding region (H-T-H motif). The short motif at Arg109 to Arg117 is the Bipartite nuclear localization signal 2 element. Residues Arg109 to Lys147 are disordered. The span at Met119–Ser138 shows a compositional bias: low complexity.

As to expression, mainly expressed in leaves and seedlings, and to a lower extent, in roots, stems and inflorescences. Isoform MYB59-1 and isoform MYB59-2 are present in roots, leaves, and seedlings, while the expression of isoform MYB59-3 and isoform MYB59-4 is confined to seedlings.

The protein resides in the nucleus. Functionally, transcription factor. In Arabidopsis thaliana (Mouse-ear cress), this protein is Transcription factor MYB59 (MYB59).